The chain runs to 1111 residues: Lon protease homolog, mitochondrial (1111 aa).

Residues methionine 1–asparagine 21 constitute a mitochondrion transit peptide. 2 disordered regions span residues isoleucine 85–proline 177 and proline 288–glutamate 311. The span at lysine 88–glutamate 125 shows a compositional bias: basic and acidic residues. Positions threonine 126–glutamate 135 are enriched in polar residues. A compositionally biased stretch (gly residues) spans glycine 145–asparagine 167. Positions valine 185–leucine 450 constitute a Lon N-terminal domain. Basic and acidic residues predominate over residues asparagine 294–glycine 306. Glycine 602 to threonine 609 serves as a coordination point for ATP. 2 stretches are compositionally biased toward basic and acidic residues: residues glutamate 819–glutamate 835 and glutamate 853–glycine 865. A disordered region spans residues glutamate 819 to serine 866. Positions serine 899–aspartate 1085 constitute a Lon proteolytic domain. Residues serine 991 and lysine 1034 contribute to the active site.

This sequence belongs to the peptidase S16 family. Homohexamer or homoheptamer. Organized in a ring with a central cavity.

The protein resides in the mitochondrion matrix. The enzyme catalyses Hydrolysis of proteins in presence of ATP.. In terms of biological role, ATP-dependent serine protease that mediates the selective degradation of misfolded, unassembled or oxidatively damaged polypeptides as well as certain short-lived regulatory proteins in the mitochondrial matrix. May also have a chaperone function in the assembly of inner membrane protein complexes. Participates in the regulation of mitochondrial gene expression and in the maintenance of the integrity of the mitochondrial genome. Binds to mitochondrial DNA in a site-specific manner. The protein is Lon protease homolog, mitochondrial of Kluyveromyces lactis (strain ATCC 8585 / CBS 2359 / DSM 70799 / NBRC 1267 / NRRL Y-1140 / WM37) (Yeast).